The chain runs to 363 residues: Aminomethyltransferase (363 aa).

It belongs to the GcvT family. As to quaternary structure, the glycine cleavage system is composed of four proteins: P, T, L and H.

The enzyme catalyses N(6)-[(R)-S(8)-aminomethyldihydrolipoyl]-L-lysyl-[protein] + (6S)-5,6,7,8-tetrahydrofolate = N(6)-[(R)-dihydrolipoyl]-L-lysyl-[protein] + (6R)-5,10-methylene-5,6,7,8-tetrahydrofolate + NH4(+). Its function is as follows. The glycine cleavage system catalyzes the degradation of glycine. The protein is Aminomethyltransferase of Dechloromonas aromatica (strain RCB).